The chain runs to 173 residues: Adenine phosphoribosyltransferase (173 aa).

It belongs to the purine/pyrimidine phosphoribosyltransferase family. Homodimer.

The protein localises to the cytoplasm. It catalyses the reaction AMP + diphosphate = 5-phospho-alpha-D-ribose 1-diphosphate + adenine. It participates in purine metabolism; AMP biosynthesis via salvage pathway; AMP from adenine: step 1/1. Functionally, catalyzes a salvage reaction resulting in the formation of AMP, that is energically less costly than de novo synthesis. In Desulfosudis oleivorans (strain DSM 6200 / JCM 39069 / Hxd3) (Desulfococcus oleovorans), this protein is Adenine phosphoribosyltransferase.